Consider the following 256-residue polypeptide: Thiazole synthase (256 aa).

Lys-95 functions as the Schiff-base intermediate with DXP in the catalytic mechanism. Residues Gly-156, 182 to 183, and 204 to 205 each bind 1-deoxy-D-xylulose 5-phosphate; these read AG and NT.

Belongs to the ThiG family. Homotetramer. Forms heterodimers with either ThiH or ThiS.

It localises to the cytoplasm. It carries out the reaction [ThiS sulfur-carrier protein]-C-terminal-Gly-aminoethanethioate + 2-iminoacetate + 1-deoxy-D-xylulose 5-phosphate = [ThiS sulfur-carrier protein]-C-terminal Gly-Gly + 2-[(2R,5Z)-2-carboxy-4-methylthiazol-5(2H)-ylidene]ethyl phosphate + 2 H2O + H(+). It participates in cofactor biosynthesis; thiamine diphosphate biosynthesis. Catalyzes the rearrangement of 1-deoxy-D-xylulose 5-phosphate (DXP) to produce the thiazole phosphate moiety of thiamine. Sulfur is provided by the thiocarboxylate moiety of the carrier protein ThiS. In vitro, sulfur can be provided by H(2)S. This Citrobacter koseri (strain ATCC BAA-895 / CDC 4225-83 / SGSC4696) protein is Thiazole synthase.